Here is a 266-residue protein sequence, read N- to C-terminus: MQRFLLPLLFLALSPPAICHYSSSTSSPSSSSVSSDASEWRPARATYYAATNPRDAVGGACGYGDLVKSGYGMATVGLSETLFERGQICGACFELRCVDDLRWCIPGTSIILTATNFCAPNYGFDPDGGGHCNPPNKHFVLPIEAFEKIAIWKAGNMPVQYRRINCRKEGSMRFTVDGGGIFISVLITNVAGSGDIAAVKIKGSRTGWLPMGRNWGQNWHINADLRNQALSFEVTSSDRSTVTSYNVSPKNWNYGQTFEGKQFETP.

Residues 1–19 form the signal peptide; the sequence is MQRFLLPLLFLALSPPAIC. The 114-residue stretch at 58–171 folds into the Expansin-like EG45 domain; sequence GGACGYGDLV…RRINCRKEGS (114 aa). Positions 181 to 260 constitute an Expansin-like CBD domain; it reads IFISVLITNV…NWNYGQTFEG (80 aa).

It belongs to the expansin family. Expansin A subfamily.

Its subcellular location is the secreted. It localises to the cell wall. The protein localises to the membrane. Its function is as follows. Causes loosening and extension of plant cell walls by disrupting non-covalent bonding between cellulose microfibrils and matrix glucans. No enzymatic activity has been found. In Arabidopsis thaliana (Mouse-ear cress), this protein is Expansin-A13 (EXPA13).